The following is a 670-amino-acid chain: DNA ligase (670 aa).

NAD(+) is bound by residues 33–37 (DAEFD), 82–83 (SL), and E113. The active-site N6-AMP-lysine intermediate is K115. The NAD(+) site is built by R136, E170, K285, and K309. Residues C403, C406, C421, and C427 each contribute to the Zn(2+) site. The region spanning 587 to 670 (EQNLYLSGKT…EVLKAGDNNG (84 aa)) is the BRCT domain.

Belongs to the NAD-dependent DNA ligase family. LigA subfamily. It depends on Mg(2+) as a cofactor. The cofactor is Mn(2+).

It carries out the reaction NAD(+) + (deoxyribonucleotide)n-3'-hydroxyl + 5'-phospho-(deoxyribonucleotide)m = (deoxyribonucleotide)n+m + AMP + beta-nicotinamide D-nucleotide.. DNA ligase that catalyzes the formation of phosphodiester linkages between 5'-phosphoryl and 3'-hydroxyl groups in double-stranded DNA using NAD as a coenzyme and as the energy source for the reaction. It is essential for DNA replication and repair of damaged DNA. In Halothermothrix orenii (strain H 168 / OCM 544 / DSM 9562), this protein is DNA ligase.